The following is a 340-amino-acid chain: UDP-N-acetylglucosamine--N-acetylmuramyl-(pentapeptide) pyrophosphoryl-undecaprenol N-acetylglucosamine transferase (340 aa).

Residues 15-17 (TGG), asparagine 127, serine 184, isoleucine 230, and glutamine 275 each bind UDP-N-acetyl-alpha-D-glucosamine.

The protein belongs to the glycosyltransferase 28 family. MurG subfamily.

It localises to the cell inner membrane. The enzyme catalyses di-trans,octa-cis-undecaprenyl diphospho-N-acetyl-alpha-D-muramoyl-L-alanyl-D-glutamyl-meso-2,6-diaminopimeloyl-D-alanyl-D-alanine + UDP-N-acetyl-alpha-D-glucosamine = di-trans,octa-cis-undecaprenyl diphospho-[N-acetyl-alpha-D-glucosaminyl-(1-&gt;4)]-N-acetyl-alpha-D-muramoyl-L-alanyl-D-glutamyl-meso-2,6-diaminopimeloyl-D-alanyl-D-alanine + UDP + H(+). Its pathway is cell wall biogenesis; peptidoglycan biosynthesis. Cell wall formation. Catalyzes the transfer of a GlcNAc subunit on undecaprenyl-pyrophosphoryl-MurNAc-pentapeptide (lipid intermediate I) to form undecaprenyl-pyrophosphoryl-MurNAc-(pentapeptide)GlcNAc (lipid intermediate II). The protein is UDP-N-acetylglucosamine--N-acetylmuramyl-(pentapeptide) pyrophosphoryl-undecaprenol N-acetylglucosamine transferase of Vesicomyosocius okutanii subsp. Calyptogena okutanii (strain HA).